Here is a 364-residue protein sequence, read N- to C-terminus: Dimethylsulfoniopropionate demethylase DmdA (364 aa).

Belongs to the GcvT family. DmdA subfamily.

It catalyses the reaction S,S-dimethyl-beta-propiothetin + (6S)-5,6,7,8-tetrahydrofolate = 3-(methylsulfanyl)propanoate + (6S)-5-methyl-5,6,7,8-tetrahydrofolate + H(+). Its function is as follows. Involved in the assimilation of dimethylsulphoniopropionate (DMSP), an important compound in the fixation of carbon in marine phytoplankton, by mediating demethylation of dimethylsulfoniopropionate (DMSP) to methyl-mercaptopropionate (MMPA). The intracellular concentration of DMSP is estimated to be 70 mM. The polypeptide is Dimethylsulfoniopropionate demethylase DmdA (Ruegeria pomeroyi (strain ATCC 700808 / DSM 15171 / DSS-3) (Silicibacter pomeroyi)).